The following is a 154-amino-acid chain: Acidic phospholipase A2 1 (154 aa).

The first 19 residues, 1 to 19, serve as a signal peptide directing secretion; that stretch reads MHPAHLLVLLGVCVSLLGA. The propeptide occupies 20-27; the sequence is ARIPPLPL. 7 cysteine pairs are disulfide-bonded: Cys-38–Cys-104, Cys-54–Cys-153, Cys-56–Cys-72, Cys-71–Cys-132, Cys-78–Cys-125, Cys-88–Cys-118, and Cys-111–Cys-123. Ca(2+)-binding residues include Phe-55, Gly-57, and Gly-59. His-75 is a catalytic residue. Asp-76 lines the Ca(2+) pocket. Asp-126 is a catalytic residue.

Belongs to the phospholipase A2 family. Group I subfamily. D49 sub-subfamily. As to quaternary structure, monomer. Requires Ca(2+) as cofactor. Expressed by the venom gland.

The protein localises to the secreted. The enzyme catalyses a 1,2-diacyl-sn-glycero-3-phosphocholine + H2O = a 1-acyl-sn-glycero-3-phosphocholine + a fatty acid + H(+). In terms of biological role, snake venom phospholipase A2 (PLA2) that shows moderate enzymatic activity and exhibits procoagulant activity. PLA2 catalyzes the calcium-dependent hydrolysis of the 2-acyl groups in 3-sn-phosphoglycerides. This Pseudonaja textilis (Eastern brown snake) protein is Acidic phospholipase A2 1.